Consider the following 167-residue polypeptide: Lipoprotein signal peptidase (167 aa).

A run of 3 helical transmembrane segments spans residues 7–27 (LFLLLGLTLTAGLDQAVKYWV), 61–81 (FSHWGIIAITIIVIIFLLWLW), and 87–107 (NKFLMRFGLVLIIGGAIGNLI). Active-site residues include aspartate 117 and aspartate 136. Residues 126–146 (IFYFAIFNLADSFITLGVIVI) form a helical membrane-spanning segment.

It belongs to the peptidase A8 family.

The protein localises to the cell inner membrane. The catalysed reaction is Release of signal peptides from bacterial membrane prolipoproteins. Hydrolyzes -Xaa-Yaa-Zaa-|-(S,diacylglyceryl)Cys-, in which Xaa is hydrophobic (preferably Leu), and Yaa (Ala or Ser) and Zaa (Gly or Ala) have small, neutral side chains.. Its pathway is protein modification; lipoprotein biosynthesis (signal peptide cleavage). In terms of biological role, this protein specifically catalyzes the removal of signal peptides from prolipoproteins. In Bartonella tribocorum (strain CIP 105476 / IBS 506), this protein is Lipoprotein signal peptidase.